The primary structure comprises 1464 residues: Secretory phospholipase A2 receptor (1464 aa).

An N-terminal signal peptide occupies residues 1–22 (MLLSPSLLLPLLLLLGAPRGCA). At 23–1398 (EGVAAALTPE…ELPEKGPSHS (1376 aa)) the chain is on the extracellular side. A Ricin B-type lectin domain is found at 40–163 (KGIFVIQSES…GSGGGDICEY (124 aa)). Disulfide bonds link C53–C66, C91–C108, C180–C206, C194–C221, C262–C356, C332–C348, C408–C503, C480–C495, C619–C636, C701–C798, C776–C790, C842–C939, C916–C931, C1069–C1089, C1211–C1225, C1282–C1378, and C1356–C1370. N-linked (GlcNAc...) asparagine glycosylation is present at N95. The 49-residue stretch at 175 to 223 (AHGMPCMFPFQYNHQWHHECTREGREDDLLWCATTSRYERDEKWGFCPD) folds into the Fibronectin type-II domain. C-type lectin domains follow at residues 240–357 (NSHI…YVCK), 387–504 (YNRN…YVCK), 524–645 (HGGF…MSLC), 675–799 (GLAS…WICK), 821–940 (YQDA…SICK), 967–1098 (FNYK…GFVC), 1123–1234 (YGNR…GAIC), and 1259–1379 (FKSN…FICK). Residue N456 is glycosylated (N-linked (GlcNAc...) asparagine). The chain crosses the membrane as a helical span at residues 1399-1419 (IIPLAVVLTLIVIVAICTLSF). Over 1420-1464 (CIYKHNGGFFRRLAGFRNPYYPATNFSTVHLEENILISDLEKSDQ) the chain is Cytoplasmic. The short motif at 1437–1443 (NPYYPAT) is the Endocytosis signal element.

Interacts with sPLA2-IB/PLA2G1B; this interaction mediates intracellular signaling as well as clearance of extracellular sPLA2-IB/PLA2G1B via endocytotic pathway. Interacts with sPLA2-X/PLA2G10; this interaction mediates sPLA2-X/PLA2G10 clearance and inactivation. Post-translationally, the secretory phospholipase A2 receptor form may be produced by the action of metalloproteinases. It contains all extracellular domains and only lacks transmembrane and cytosolic regions. It is however unclear whether this form is produced by proteolytic cleavage as suggested by some experiments, or by alternative splicing.

It is found in the cell membrane. The protein localises to the secreted. Its function is as follows. Receptor for secretory phospholipase A2 (sPLA2). Also able to bind to snake PA2-like toxins. Although its precise function remains unclear, binding of sPLA2 to its receptor participates in both positive and negative regulation of sPLA2 functions as well as clearance of sPLA2. Binding of sPLA2-IB/PLA2G1B induces various effects depending on the cell type, such as activation of the mitogen-activated protein kinase (MAPK) cascade to induce cell proliferation, the production of lipid mediators, selective release of arachidonic acid in bone marrow-derived mast cells. In neutrophils, binding of sPLA2-IB/PLA2G1B can activate p38 MAPK to stimulate elastase release and cell adhesion. May be involved in responses in pro-inflammatory cytokine productions during endotoxic shock. Also has endocytic properties and rapidly internalizes sPLA2 ligands, which is particularly important for the clearance of extracellular sPLA2s to protect their potent enzymatic activities. The soluble secretory phospholipase A2 receptor form is circulating and acts as a negative regulator of sPLA2 functions by blocking the biological functions of sPLA2-IB/PLA2G1B and sPLA2-X/PLA2G10. This chain is Secretory phospholipase A2 receptor (PLA2R1), found in Pongo abelii (Sumatran orangutan).